The primary structure comprises 149 residues: UPF0178 protein HEAR0259 (149 aa).

It belongs to the UPF0178 family.

The polypeptide is UPF0178 protein HEAR0259 (Herminiimonas arsenicoxydans).